Here is a 315-residue protein sequence, read N- to C-terminus: Methionyl-tRNA formyltransferase (315 aa).

Ser113–Pro116 is a (6S)-5,6,7,8-tetrahydrofolate binding site.

This sequence belongs to the Fmt family.

The catalysed reaction is L-methionyl-tRNA(fMet) + (6R)-10-formyltetrahydrofolate = N-formyl-L-methionyl-tRNA(fMet) + (6S)-5,6,7,8-tetrahydrofolate + H(+). In terms of biological role, attaches a formyl group to the free amino group of methionyl-tRNA(fMet). The formyl group appears to play a dual role in the initiator identity of N-formylmethionyl-tRNA by promoting its recognition by IF2 and preventing the misappropriation of this tRNA by the elongation apparatus. In Shigella flexneri serotype 5b (strain 8401), this protein is Methionyl-tRNA formyltransferase.